The sequence spans 171 residues: MLP-like protein 31 (171 aa).

Belongs to the MLP family.

This Arabidopsis thaliana (Mouse-ear cress) protein is MLP-like protein 31 (MLP31).